We begin with the raw amino-acid sequence, 1074 residues long: Zinc finger protein 518B (1074 aa).

The span at 12-24 shows a compositional bias: polar residues; that stretch reads HLNGGHNSLTMSP. Positions 12-36 are disordered; that stretch reads HLNGGHNSLTMSPKQPDANGAPRPN. 2 C2H2-type zinc fingers span residues 162–184 and 190–213; these read FICS…LVKH and YQCE…KRVH. Glycyl lysine isopeptide (Lys-Gly) (interchain with G-Cter in SUMO2) cross-links involve residues Lys482, Lys491, and Lys558. A disordered region spans residues 568–590; the sequence is SNRKQEDNQTEEHKAVSTVGQIS. Positions 570–582 are enriched in basic and acidic residues; sequence RKQEDNQTEEHKA. Lys594 is covalently cross-linked (Glycyl lysine isopeptide (Lys-Gly) (interchain with G-Cter in SUMO2)). 2 disordered regions span residues 603-632 and 678-704; these read TGED…DGPV and KPSS…KATS. Residues 604–622 are compositionally biased toward basic and acidic residues; sequence GEDRSQQPGDKPLELKNSE. The span at 693–704 shows a compositional bias: polar residues; that stretch reads GQASKGTSKATS. Glycyl lysine isopeptide (Lys-Gly) (interchain with G-Cter in SUMO2) cross-links involve residues Lys809, Lys846, and Lys860. A C2H2-type 3 zinc finger spans residues 1036–1058; sequence FKCWFCGRLYEDQEEWMSHGQRH.

Belongs to the krueppel C2H2-type zinc-finger protein family.

Its subcellular location is the nucleus. Its function is as follows. Through its association with the EHMT1-EHMT2/G9A and PRC2/EED-EZH2 histone methyltransferase complexes may function in gene silencing, regulating repressive post-translational methylation of histone tails at promoters of target genes. This Homo sapiens (Human) protein is Zinc finger protein 518B (ZNF518B).